The sequence spans 119 residues: Protein MGF 110-11L (119 aa).

Positions 1 to 17 (MKVLLGLLLGYSVLILA) are cleaved as a signal peptide.

This sequence belongs to the asfivirus MGF 110 family.

This chain is Protein MGF 110-11L, found in Ornithodoros (relapsing fever ticks).